We begin with the raw amino-acid sequence, 232 residues long: 7-cyano-7-deazaguanine synthase (232 aa).

8–18 (FSGGQDSTTCL) contributes to the ATP binding site. Zn(2+) contacts are provided by Cys189, Cys198, Cys201, and Cys204.

Belongs to the QueC family. Requires Zn(2+) as cofactor.

The catalysed reaction is 7-carboxy-7-deazaguanine + NH4(+) + ATP = 7-cyano-7-deazaguanine + ADP + phosphate + H2O + H(+). Its pathway is purine metabolism; 7-cyano-7-deazaguanine biosynthesis. In terms of biological role, catalyzes the ATP-dependent conversion of 7-carboxy-7-deazaguanine (CDG) to 7-cyano-7-deazaguanine (preQ(0)). The protein is 7-cyano-7-deazaguanine synthase of Serratia proteamaculans (strain 568).